A 219-amino-acid polypeptide reads, in one-letter code: Protein-L-isoaspartate O-methyltransferase (219 aa).

Residue serine 60 is part of the active site.

This sequence belongs to the methyltransferase superfamily. L-isoaspartyl/D-aspartyl protein methyltransferase family.

The protein resides in the cytoplasm. It carries out the reaction [protein]-L-isoaspartate + S-adenosyl-L-methionine = [protein]-L-isoaspartate alpha-methyl ester + S-adenosyl-L-homocysteine. Catalyzes the methyl esterification of L-isoaspartyl residues in peptides and proteins that result from spontaneous decomposition of normal L-aspartyl and L-asparaginyl residues. It plays a role in the repair and/or degradation of damaged proteins. The protein is Protein-L-isoaspartate O-methyltransferase of Rhodospirillum rubrum (strain ATCC 11170 / ATH 1.1.1 / DSM 467 / LMG 4362 / NCIMB 8255 / S1).